The sequence spans 338 residues: Ketol-acid reductoisomerase (NADP(+)) (338 aa).

The region spanning 1–181 (MNVFYDKDAD…GGGRAGIIET (181 aa)) is the KARI N-terminal Rossmann domain. NADP(+) contacts are provided by residues 24 to 27 (YGSQ), R47, and S52. The active site involves H107. G133 is an NADP(+) binding site. One can recognise a KARI C-terminal knotted domain in the interval 182 to 327 (NFREETETDL…AKLRAMMPWI (146 aa)). Residues D190, E194, E226, and E230 each coordinate Mg(2+). Residue S251 coordinates substrate.

It belongs to the ketol-acid reductoisomerase family. Mg(2+) is required as a cofactor.

The catalysed reaction is (2R)-2,3-dihydroxy-3-methylbutanoate + NADP(+) = (2S)-2-acetolactate + NADPH + H(+). It carries out the reaction (2R,3R)-2,3-dihydroxy-3-methylpentanoate + NADP(+) = (S)-2-ethyl-2-hydroxy-3-oxobutanoate + NADPH + H(+). The protein operates within amino-acid biosynthesis; L-isoleucine biosynthesis; L-isoleucine from 2-oxobutanoate: step 2/4. It participates in amino-acid biosynthesis; L-valine biosynthesis; L-valine from pyruvate: step 2/4. In terms of biological role, involved in the biosynthesis of branched-chain amino acids (BCAA). Catalyzes an alkyl-migration followed by a ketol-acid reduction of (S)-2-acetolactate (S2AL) to yield (R)-2,3-dihydroxy-isovalerate. In the isomerase reaction, S2AL is rearranged via a Mg-dependent methyl migration to produce 3-hydroxy-3-methyl-2-ketobutyrate (HMKB). In the reductase reaction, this 2-ketoacid undergoes a metal-dependent reduction by NADPH to yield (R)-2,3-dihydroxy-isovalerate. The chain is Ketol-acid reductoisomerase (NADP(+)) from Burkholderia cenocepacia (strain HI2424).